The primary structure comprises 244 residues: Tubulin-folding cofactor B (244 aa).

The residue at position 1 (methionine 1) is an N-acetylmethionine. Position 98 is a phosphotyrosine (tyrosine 98). A Phosphoserine modification is found at serine 110. The region spanning 183-225 (GLTDFKPGYWIGIRYDEPLGKNDGSVNGKRYFECQAKYGAFVK) is the CAP-Gly domain. Lysine 219 carries the post-translational modification N6-acetyllysine.

This sequence belongs to the TBCB family. In terms of assembly, supercomplex made of cofactors A to E. Cofactors A and D function by capturing and stabilizing tubulin in a quasi-native conformation. Cofactor E binds to the cofactor D-tubulin complex; interaction with cofactor C then causes the release of tubulin polypeptides that are committed to the native state. Cofactors B and E can form a heterodimer which binds to alpha-tubulin and enhances their ability to dissociate tubulin heterodimers. Interacts with GAN. Interacts with DCTN1. Post-translationally, ubiquitinated in the presence of GAN which targets it for degradation by the proteasome. Phosphorylation by PAK1 is required for normal function.

Its subcellular location is the cytoplasm. It is found in the cytoskeleton. In terms of biological role, binds to alpha-tubulin folding intermediates after their interaction with cytosolic chaperonin in the pathway leading from newly synthesized tubulin to properly folded heterodimer. Involved in regulation of tubulin heterodimer dissociation. May function as a negative regulator of axonal growth. The protein is Tubulin-folding cofactor B (TBCB) of Bos taurus (Bovine).